The primary structure comprises 474 residues: MPRLIKDRVPTPERSVGERVRDFGEVNLGYSWELALREAERCLQCPVEYAPCIKGCPVHINIPGFIKALRENRDNPSKAVREALRIIWRDNTLPAITGRVCPQEEQCEGACVVGKVGDPINIGKLERFVADYAREHGIDDELLLEEIKGIKRNGKKVAIIGAGPAGLTCAADLAKMGYEVTIYEALHQPGGVLIYGIPEFRLPKEIVKKELENLRRLGVKIETNVLVGKTITFEELREEYDAIFIGTGAGTPRIYPWPGVNLNGIYSANEFLTRINLMKAYKFPEYDTPIKVGKRVAVIGGGNTAMDAARSALRLGAEVWILYRRTRKEMTAREEEIKHAEEEGVKFMFLVTPKRFIGDENGNLKAIELEKMKLGEPDESGRRRPIPTGETFIMEFDTAIIAIGQTPNKTFLETVPGLKVDEWGRIVVDENLMTSIPGVFAGGDAIRGEATVILAMGDGRKAAKAIHQYLSKEK.

Positions 1-2 (MP) are excised as a propeptide. Residues Cys42, Cys45, Cys52, and Cys56 each contribute to the [4Fe-4S] cluster site. Cys101, Cys107, and Cys111 together coordinate [3Fe-4S] cluster.

As to quaternary structure, heterodimer of alpha and beta subunits. FAD is required as a cofactor. Requires [3Fe-4S] cluster as cofactor. It depends on [4Fe-4S] cluster as a cofactor.

The protein resides in the cytoplasm. The catalysed reaction is n sulfur + hydrogen sulfide + NADP(+) = (n+1) sulfur + NADPH. The enzyme catalyses 2 reduced [2Fe-2S]-[ferredoxin] + NADP(+) + H(+) = 2 oxidized [2Fe-2S]-[ferredoxin] + NADPH. A bifunctional enzyme that catalyzes the reduction of elemental sulfur or polysulfide to hydrogen sulfide with NADPH as electron donor. Also functions as a reduced ferredoxin:NADP oxidoreductase with a very high affinity for reduced ferredoxin. Exhibits a broad specificity for various physiological and non-physiological substrates with varied reduction potentials such as methyl viologen, benzyl viologen, FAD, FMN, methylene blue, 2,6-dichlorophenolindophenol (DCIP), cytochrome C and ferricyanide with highest preference for benzyl viologen. Does not reduce fumarate, succinate, nitrate, nitrite, sulfate, sulfite or protons. Does not possess any hydrogenase activity or NADPH-dependent glutamate synthase activity. The polypeptide is Sulfide dehydrogenase subunit alpha (Pyrococcus furiosus (strain ATCC 43587 / DSM 3638 / JCM 8422 / Vc1)).